Reading from the N-terminus, the 333-residue chain is Tetraacyldisaccharide 4'-kinase (333 aa).

60–67 (TVGGTGKT) serves as a coordination point for ATP.

It belongs to the LpxK family.

It catalyses the reaction a lipid A disaccharide + ATP = a lipid IVA + ADP + H(+). The protein operates within glycolipid biosynthesis; lipid IV(A) biosynthesis; lipid IV(A) from (3R)-3-hydroxytetradecanoyl-[acyl-carrier-protein] and UDP-N-acetyl-alpha-D-glucosamine: step 6/6. Its function is as follows. Transfers the gamma-phosphate of ATP to the 4'-position of a tetraacyldisaccharide 1-phosphate intermediate (termed DS-1-P) to form tetraacyldisaccharide 1,4'-bis-phosphate (lipid IVA). The protein is Tetraacyldisaccharide 4'-kinase of Azotobacter vinelandii (strain DJ / ATCC BAA-1303).